Here is a 325-residue protein sequence, read N- to C-terminus: MSIKEFAKNAREAYFTLPNGDKIPSIGLGTWRSGKDETKNAVCAALKAGYRHIDTAHIYGNEKEIGEGIRESGVPRTDIWVTSKLWCNAHRAGLVPLALEKTLQDLNLEYIDAYLIHWPFALLSGPEELPRNEKGELIYEDVPIEETWQAMEELLETGKVRYIGISNFNNEYLDRVLKIAKVKPTIHQMELHPYLPQTEYLEKHKKLQIHVSAYSPLANQNDAYNSDISKLIEHKTLVDIANARGEGITPANIAISWAVKRGTSVLPKSVNESRIVSNFLYIPLTDKEMEAINNIGVVRRFSHGKFAPKPMFVGLQDGTPKQTHA.

The active-site Proton donor is the Tyr59. His117 is a substrate binding site.

It belongs to the aldo/keto reductase family.

The protein localises to the cytoplasm. The protein resides in the nucleus. This is an uncharacterized protein from Schizosaccharomyces pombe (strain 972 / ATCC 24843) (Fission yeast).